A 431-amino-acid polypeptide reads, in one-letter code: Ornithine decarboxylase (431 aa).

K94 is subject to N6-(pyridoxal phosphate)lysine. Pyridoxal 5'-phosphate contacts are provided by residues S226, G264, and 297 to 300 (EPGR). Position 340 to 341 (340 to 341 (YD)) interacts with substrate. Residue C376 is the Proton donor; shared with dimeric partner of the active site. D377 contributes to the substrate binding site. Y405 provides a ligand contact to pyridoxal 5'-phosphate.

It belongs to the Orn/Lys/Arg decarboxylase class-II family. As to quaternary structure, homodimer. Only the dimer is catalytically active, as the active sites are constructed of residues from both monomers. It depends on pyridoxal 5'-phosphate as a cofactor.

The enzyme catalyses L-ornithine + H(+) = putrescine + CO2. It functions in the pathway amine and polyamine biosynthesis; putrescine biosynthesis via L-ornithine pathway; putrescine from L-ornithine: step 1/1. With respect to regulation, inhibited by antizyme (AZ) in response to polyamine levels. AZ inhibits the assembly of the functional homodimer by binding to ODC monomers and targeting them for ubiquitin-independent proteolytic destruction by the 26S proteasome. Catalyzes the first and rate-limiting step of polyamine biosynthesis that converts ornithine into putrescine, which is the precursor for the polyamines, spermidine and spermine. Polyamines are essential for cell proliferation and are implicated in cellular processes, ranging from DNA replication to apoptosis. The protein is Ornithine decarboxylase of Datura stramonium (Jimsonweed).